An 865-amino-acid chain; its full sequence is High affinity cAMP-specific and IBMX-insensitive 3',5'-cyclic phosphodiesterase 8B (865 aa).

Disordered regions lie at residues 17-40 (CRDS…TAPL) and 52-92 (AMPP…TCRG). A compositionally biased stretch (polar residues) spans 23 to 36 (SNSPRQTSSVSQGP). Residues 75–90 (GSGSSTGSSGPATTTC) show a composition bias toward low complexity. The region spanning 247–318 (ACNSVFTALD…DTINTCIKKG (72 aa)) is the PAS domain. The segment at 373 to 415 (IHRDSGDNSQTEPHSFRHKSRRKESIDVKSISSRGSDAPSLQN) is disordered. Polar residues predominate over residues 402–415 (SISSRGSDAPSLQN). Phosphoserine is present on S497. A PDEase domain is found at 519 to 855 (TINDVPPSIA…KHWKTLDDLK (337 aa)). The Proton donor role is filled by H595. A divalent metal cation contacts are provided by H599, H635, and D636. 2 positions are modified to phosphoserine: S731 and S734. A divalent metal cation is bound at residue D761.

The protein belongs to the cyclic nucleotide phosphodiesterase family. PDE8 subfamily. A divalent metal cation is required as a cofactor. In terms of tissue distribution, widely expressed.

It catalyses the reaction 3',5'-cyclic AMP + H2O = AMP + H(+). Its pathway is purine metabolism; 3',5'-cyclic AMP degradation; AMP from 3',5'-cyclic AMP: step 1/1. Hydrolyzes the second messenger cAMP, which is a key regulator of many important physiological processes. May be involved in specific signaling in the thyroid gland. This is High affinity cAMP-specific and IBMX-insensitive 3',5'-cyclic phosphodiesterase 8B (Pde8b) from Mus musculus (Mouse).